Consider the following 1436-residue polypeptide: DNA-directed RNA polymerase subunit beta (1436 aa).

The protein belongs to the RNA polymerase beta chain family. The RNAP catalytic core consists of 2 alpha, 1 beta, 1 beta' and 1 omega subunit. When a sigma factor is associated with the core the holoenzyme is formed, which can initiate transcription.

It catalyses the reaction RNA(n) + a ribonucleoside 5'-triphosphate = RNA(n+1) + diphosphate. Its function is as follows. DNA-dependent RNA polymerase catalyzes the transcription of DNA into RNA using the four ribonucleoside triphosphates as substrates. This is DNA-directed RNA polymerase subunit beta from Wolbachia pipientis.